The primary structure comprises 893 residues: MSGLQLIWKSPTQLVLFVLLITISCIDLCHAVGAATPTKKSPPVRITKPQPVSSTTTAIPTTNEGSTTGEQLALLVSSTTEGTASSASSSSNGGSDDSSSTTAAGSLVPEICITGLQLSFTNADGEQVVRKQQELVQVIEGDVMLSVITSDPVSALFVINRVNQANLISADFEVGIRAINVDNASLAENLLIQEVQYLQQCTQYSMGIFIDFDLYKRLESIIRDLEYNVWPIPSARAHLFPKVAHLLHQMPWGEKIASVEIVTETLDIYNEFMDAARQEHMCLMHFKSDDNVYILFGNKMANHFKENGTVFAVPTERTEHIFLEELPNKSFILMENGIELRTADLDPMPTTLDEVLIGKSVLPSRILVFASPIVDLMNWLRGSLAKHCKRDEDLYMLESCFNFLNFIEDWRTPEYRRTHDTAELLSLLRMRKLSTSMLFQMYQKKQETVDVITGESRMELREIASQNFVTNVTTYYHYNRDNHTSLELKTKFGLVFNCQFTAGENRRYPFLFDGESVMFWRIKLDTWVATGLTAAILGLIATLAILVFIVVRISLGDVFEGNPVTSILLLLSLILVFCSFVPFSMEYVGEQRNSHVTFEDVHTLNTLCGVRVFIMTLVYCFVFSLLLCRAVMLASIGSEGGFLSHVNGYIQAIICVLSVFVQVGMSVQLLVVMHLASESVSCENIYYGRWLWGLLAYDFLLLCSLVSLVPFIYRSQRNYREGILIVIGAVLILIIWSVWIALSMFGDEWRDAAIPLGMQASGWAVLVGILIPRTFLIVRGIERSDIAQALPSLTSLAFAQNNQYSSEQSVYECVNPAMRHCSQEEMNHQSPSEIPTLPLRGGGPRRQQFFANLRQANANINPQRPPPHPQQSPSRSSVCSLPPSPDHSKITRF.

The signal sequence occupies residues 1–30 (MSGLQLIWKSPTQLVLFVLLITISCIDLCH). The Extracellular segment spans residues 32-530 (VGAATPTKKS…RIKLDTWVAT (499 aa)). 2 disordered regions span residues 36–66 (TPTKKSPPVRITKPQPVSSTTTAIPTTNEGS) and 82–102 (GTASSASSSSNGGSDDSSSTT). Polar residues predominate over residues 50 to 66 (QPVSSTTTAIPTTNEGS). N-linked (GlcNAc...) asparagine glycans are attached at residues N183, N307, N328, N471, and N482. Transmembrane regions (helical) follow at residues 531 to 551 (GLTAAILGLIATLAILVFIVV), 563 to 583 (PVTSILLLLSLILVFCSFVPF), 607 to 627 (LCGVRVFIMTLVYCFVFSLLL), 630 to 650 (AVMLASIGSEGGFLSHVNGYI), 653 to 673 (IICVLSVFVQVGMSVQLLVVM), 692 to 712 (WGLLAYDFLLLCSLVSLVPFI), 722 to 742 (GILIVIGAVLILIIWSVWIAL), and 752 to 772 (AAIPLGMQASGWAVLVGILIP). Residues 773–893 (RTFLIVRGIE…SPDHSKITRF (121 aa)) lie on the Cytoplasmic side of the membrane. Positions 858-893 (ANINPQRPPPHPQQSPSRSSVCSLPPSPDHSKITRF) are disordered.

The protein belongs to the G-protein coupled receptor 3 family.

The protein localises to the cell membrane. Acts as a ligand for sevenless tyrosine-kinase receptor during eye development. In Drosophila virilis (Fruit fly), this protein is Protein bride of sevenless (boss).